A 219-amino-acid chain; its full sequence is Occludin/ELL domain-containing protein 1 (219 aa).

The interval 1–110 is disordered; the sequence is MQIHAGPASR…DYELKYPPVT (110 aa). Low complexity predominate over residues 17-43; the sequence is LARLSGPEATCNSRPAARGRQRAAAPR. Positions 72–93 are enriched in basic and acidic residues; the sequence is VFADELRPREPLHPEKHPRDLG. The OCEL domain maps to 100-210; that stretch reads PDYELKYPPV…QIRKFDDQQD (111 aa).

The protein belongs to the ELL/occludin family.

The sequence is that of Occludin/ELL domain-containing protein 1 (Ocel1) from Mus musculus (Mouse).